Reading from the N-terminus, the 191-residue chain is Protein GrpE (191 aa).

This sequence belongs to the GrpE family. As to quaternary structure, homodimer.

The protein resides in the cytoplasm. Participates actively in the response to hyperosmotic and heat shock by preventing the aggregation of stress-denatured proteins, in association with DnaK and GrpE. It is the nucleotide exchange factor for DnaK and may function as a thermosensor. Unfolded proteins bind initially to DnaJ; upon interaction with the DnaJ-bound protein, DnaK hydrolyzes its bound ATP, resulting in the formation of a stable complex. GrpE releases ADP from DnaK; ATP binding to DnaK triggers the release of the substrate protein, thus completing the reaction cycle. Several rounds of ATP-dependent interactions between DnaJ, DnaK and GrpE are required for fully efficient folding. This chain is Protein GrpE, found in Nitratidesulfovibrio vulgaris (strain ATCC 29579 / DSM 644 / CCUG 34227 / NCIMB 8303 / VKM B-1760 / Hildenborough) (Desulfovibrio vulgaris).